The sequence spans 152 residues: Small ribosomal subunit protein uS13 (152 aa).

At S41 the chain carries Phosphoserine.

This sequence belongs to the universal ribosomal protein uS13 family.

The protein localises to the cytoplasm. Its function is as follows. Located at the top of the head of the 40S subunit, it contacts several helices of the 18S rRNA. The chain is Small ribosomal subunit protein uS13 (RpS18) from Drosophila melanogaster (Fruit fly).